Here is a 169-residue protein sequence, read N- to C-terminus: Cell division inhibitor SulA (169 aa).

Residues 106–112 (ALRTGNY) are ftsZ binding. Positions 162–169 (KIHSNLYH) are lon protease binding.

Belongs to the SulA family. Interacts with FtsZ. In terms of processing, is rapidly cleaved and degraded by the Lon protease once DNA damage is repaired.

Component of the SOS system and an inhibitor of cell division. Accumulation of SulA causes rapid cessation of cell division and the appearance of long, non-septate filaments. In the presence of GTP, binds a polymerization-competent form of FtsZ in a 1:1 ratio, thus inhibiting FtsZ polymerization and therefore preventing it from participating in the assembly of the Z ring. This mechanism prevents the premature segregation of damaged DNA to daughter cells during cell division. In Salmonella arizonae (strain ATCC BAA-731 / CDC346-86 / RSK2980), this protein is Cell division inhibitor SulA.